The following is a 576-amino-acid chain: Type II restriction enzyme BsuRI (576 aa).

As to quaternary structure, monomer. Mg(2+) is required as a cofactor.

The enzyme catalyses Endonucleolytic cleavage of DNA to give specific double-stranded fragments with terminal 5'-phosphates.. Its function is as follows. A P subtype restriction enzyme that recognizes the double-stranded sequence 5'-GGCC-3' and cleaves after G-2. In Bacillus subtilis, this protein is Type II restriction enzyme BsuRI (hsdRR).